Reading from the N-terminus, the 155-residue chain is Ribosome maturation factor RimP (155 aa).

The protein belongs to the RimP family.

It localises to the cytoplasm. In terms of biological role, required for maturation of 30S ribosomal subunits. The chain is Ribosome maturation factor RimP from Dichelobacter nodosus (strain VCS1703A).